A 593-amino-acid chain; its full sequence is Probable metalloendopeptidase G1-type (593 aa).

H41 serves as a coordination point for Zn(2+). The active site involves E44. H45 is a binding site for Zn(2+).

It belongs to the peptidase M44 family. Requires Zn(2+) as cofactor.

Seems to be involved in viral proteins maturation by cleavage at Ala-Gly-|-Xaa motifs. The chain is Probable metalloendopeptidase G1-type from Homo sapiens (Human).